The sequence spans 211 residues: Suppressor of RNA silencing p3 (211 aa).

Belongs to the tenuiviruses p3 protein family. In terms of assembly, homodimer.

Its subcellular location is the host cytoplasm. In terms of biological role, acts as a suppressor of RNA-mediated gene silencing, also known as post-transcriptional gene silencing (PTGS), presumably through the binding of dsRNA. The polypeptide is Suppressor of RNA silencing p3 (Avena sativa (Oat)).